Here is a 436-residue protein sequence, read N- to C-terminus: N-lysine methyltransferase SMYD2 (436 aa).

One can recognise an SET domain in the interval 10-244 (GGLERFASPG…PGEEVFTSYI (235 aa)). An S-adenosyl-L-methionine-binding site is contributed by 20–22 (KGR). 8 residues coordinate Zn(2+): Cys-55, Cys-58, Cys-68, Cys-71, Cys-77, Cys-81, His-89, and Cys-93. The segment at 55–93 (CDGCFARKEGLSKCGRCKQAFYCNVECQKEDWPMHKLEC) adopts an MYND-type zinc-finger fold. S-adenosyl-L-methionine contacts are provided by residues His-140, 209-210 (NH), and 261-263 (YFF).

This sequence belongs to the class V-like SAM-binding methyltransferase superfamily.

It localises to the cytoplasm. Its subcellular location is the cytosol. It is found in the nucleus. The enzyme catalyses L-lysyl(4)-[histone H3] + 3 S-adenosyl-L-methionine = N(6),N(6),N(6)-trimethyl-L-lysyl(4)-[histone H3] + 3 S-adenosyl-L-homocysteine + 3 H(+). The catalysed reaction is L-lysyl-[protein] + S-adenosyl-L-methionine = N(6)-methyl-L-lysyl-[protein] + S-adenosyl-L-homocysteine + H(+). Protein-lysine N-methyltransferase that methylates both histones and non-histone proteins, including p53/TP53 and RB1. Specifically trimethylates histone H3 'Lys-4' (H3K4me3) in vivo. The activity requires interaction with HSP90alpha. Shows even higher methyltransferase activity on p53/TP53. Monomethylates 'Lys-370' of p53/TP53, leading to decreased DNA-binding activity and subsequent transcriptional regulation activity of p53/TP53. Monomethylates RB1 at 'Lys-860'. The chain is N-lysine methyltransferase SMYD2 (SMYD2) from Gallus gallus (Chicken).